Consider the following 121-residue polypeptide: Insulin-like peptide 01 (121 aa).

An N-terminal signal peptide occupies residues 1 to 24; it reads MDSFTRASLITFLILLTLTSLVFS. A propeptide spanning residues 25 to 45 is cleaved from the precursor; the sequence is NGCMMRGGCFKTSEDAHRLIM. Disulfide bonds link Cys52–Cys107, Cys64–Cys120, and Cys106–Cys111. A propeptide spans 69 to 97 (c peptide); the sequence is RRRKRDLRRKLGIVMDRKESHKFLRRRKR.

The protein belongs to the insulin family.

It localises to the secreted. In terms of biological role, insulin decreases blood glucose concentration. May have evolved to activate insulin receptors (INSR) in vertebrates. Molecular docking studies reveals unique interaction with the human insulin receptor. In vivo, insulin-like peptide injection reduces blood glucose levels in two models of zebrafish diabetes (streptozotocin- and glucose-induced). Also shorter swimming distance of zebrafish larvae, an effect which is not observed with human insulin. In Exaiptasia diaphana (Tropical sea anemone), this protein is Insulin-like peptide 01.